Reading from the N-terminus, the 548-residue chain is Chaperonin GroEL (548 aa).

ATP is bound by residues 30-33 (TLGP), K51, 87-91 (DGTTT), G415, and D496.

This sequence belongs to the chaperonin (HSP60) family. As to quaternary structure, forms a cylinder of 14 subunits composed of two heptameric rings stacked back-to-back. Interacts with the co-chaperonin GroES.

Its subcellular location is the cytoplasm. The catalysed reaction is ATP + H2O + a folded polypeptide = ADP + phosphate + an unfolded polypeptide.. In terms of biological role, together with its co-chaperonin GroES, plays an essential role in assisting protein folding. The GroEL-GroES system forms a nano-cage that allows encapsulation of the non-native substrate proteins and provides a physical environment optimized to promote and accelerate protein folding. In Haemophilus influenzae (strain PittGG), this protein is Chaperonin GroEL.